Here is a 494-residue protein sequence, read N- to C-terminus: WD repeat-containing protein 37 (494 aa).

The disordered stretch occupies residues 1-38; sequence MPTESGSWAAARQTKQKRKSHSLSIKRTNSSEQDRPGL. The segment covering 22–31 has biased composition (polar residues); that stretch reads SLSIKRTNSS. 2 WD repeats span residues 154 to 194 and 197 to 236; these read GHRD…CLIK and GHAG…PTPQ. The disordered stretch occupies residues 236-266; the sequence is QPTADTSISGEEEVDFSDKDENDGDGDASSD. The segment covering 245–263 has biased composition (acidic residues); the sequence is GEEEVDFSDKDENDGDGDA. 5 WD repeats span residues 279-318, 321-360, 365-403, 406-445, and 452-493; these read SHQG…LVHS, GHDQ…IHSV, GHTD…SPIA, RTDS…LARL, and GHRR…LLQE.

Its subcellular location is the cytoplasm. The protein localises to the nucleus. This is WD repeat-containing protein 37 (wdr37) from Xenopus tropicalis (Western clawed frog).